A 287-amino-acid polypeptide reads, in one-letter code: Protein REVEILLE 3 (287 aa).

The HTH myb-type domain maps to 56–110 (TITKSRENWTEQEHDKFLEALHLFDRDWKKIKAFVGSKTVIQIRSHAQKYFLKVQ). The segment at residues 83–106 (WKKIKAFVGSKTVIQIRSHAQKYF) is a DNA-binding region (H-T-H motif). A disordered region spans residues 111–135 (KNGTKEHLPPPRPKRKANHPYPQKA).

Its subcellular location is the nucleus. Probable transcription factor. The protein is Protein REVEILLE 3 (RVE3) of Arabidopsis thaliana (Mouse-ear cress).